A 231-amino-acid chain; its full sequence is uncharacterized protein (231 aa).

The Response regulatory domain maps to Arg4–Leu116. At Asp52 the chain carries 4-aspartylphosphate. Residues Glu129 to Ala230 constitute a DNA-binding region (ompR/PhoB-type).

Post-translationally, phosphorylated by YrkQ.

It is found in the cytoplasm. Member of the two-component regulatory system YrkQ/YrkP. This is an uncharacterized protein from Bacillus subtilis (strain 168).